Here is a 355-residue protein sequence, read N- to C-terminus: Guanine nucleotide-binding protein G(i) subunit alpha-2 (355 aa).

Gly-2 carries the N-myristoyl glycine lipid modification. A lipid anchor (S-palmitoyl cysteine) is attached at Cys-3. The G-alpha domain occupies Arg-32–Phe-355. The segment at Lys-35–Thr-48 is G1 motif. Residues Gly-40–Ser-47, Leu-176–Thr-182, Asp-201–Gln-205, Asn-270–Asp-273, and Ala-327 contribute to the GTP site. Residue Ser-47 coordinates Mg(2+). Residues Asp-174–Thr-182 form a G2 motif region. Arg-179 bears the ADP-ribosylarginine; by cholera toxin mark. Thr-182 contacts Mg(2+). The segment at Phe-197 to Arg-206 is G3 motif. Gln-205 is modified (deamidated glutamine; by Photorhabdus PAU_02230). The tract at residues Ile-266–Asp-273 is G4 motif. The G5 motif stretch occupies residues Thr-325–Thr-330. Cys-352 bears the ADP-ribosylcysteine; by pertussis toxin mark.

The protein belongs to the G-alpha family. G(i/o/t/z) subfamily. As to quaternary structure, g proteins are composed of 3 units; alpha, beta and gamma. The alpha chain contains the guanine nucleotide binding site. In this context, interacts with GNB2. Interacts with GPSM1. Interacts with RGS12 and RGS14. Interacts with UNC5B. Interacts (inactive GDP-bound form) with NUCB1 (via GBA motif); the interaction leads to activation of GNAI3. Interacts (inactive GDP-bound form) with CCDC88C/DAPLE (via GBA motif). Interacts (inactive GDP-bound form) with CCDC8A/GIV (via GBA motif). Interacts with CXCR1 and CXCR2. Post-translationally, (Microbial infection) Deamidated at Gln-205 by Photorhabdus asymbiotica toxin PAU_02230, blocking GTP hydrolysis of heterotrimeric GNAQ or GNA11 and G-alphai (GNAI1, GNAI2 or GNAI3) proteins, thereby activating RhoA.

The protein resides in the cytoplasm. It is found in the cytoskeleton. The protein localises to the microtubule organizing center. It localises to the centrosome. Its subcellular location is the cell membrane. The protein resides in the membrane. In terms of biological role, guanine nucleotide-binding proteins (G proteins) are involved as modulators or transducers in various transmembrane signaling systems. The G(i) proteins are involved in hormonal regulation of adenylate cyclase: they inhibit the cyclase in response to beta-adrenergic stimuli. May play a role in cell division. Regulates the cell surface density of dopamine receptors DRD2 by sequestrating them as an intracellular pool. This Homo sapiens (Human) protein is Guanine nucleotide-binding protein G(i) subunit alpha-2 (GNAI2).